Reading from the N-terminus, the 695-residue chain is MDSDMDYERPNVETIKCVVVGDNAVGKTRLICARACNTTLTQYQLLATHVPTVWAIDQYRVCQEVLERSRDVVDEVSISLRLWDTFGDHHKDRRFAYGRSDVVVLCFSIANPNSLNHVKTMWYQEIKHFCPRTPVVLVGCQLDLRYADLEAVNRARRPLARPIKRGDILPPEKGREVAKELGIPYYETSVFDQFGIKDVFDNAIRAALISRRHLQFWKSHLKKVQKPLLQAPFLPPKAPPPVIKVPECPSAGTSDAACLLDNPLCADVLFVLHDEEHIFAHRIYLATSSSKFYDLFLMECEESPCWGGGAGEEVPCRDFQGRTQSLGSAEEGKEGPQRTPQADPGASSGQDLPESLALQMEASGSEGHALSGWSKGFVSMHREVRVNPISKRVGPVTVVRLDPSMQSGPFRTLLRFLYSGQLDEKEKDLLGLAQMAEVLEMFDLRMMVENIMNKEAFMNQEITKAFHVRKANRIKECLSKGTFSDVTFTLDDGAISAHKPLLICSCEWMAAMFGGSFVESANREVHLPNINKMSMQAVLEYLYTKQLSPNLDLDPLELIALANRFCLTHLVALVEQHAVQELTKAAVSGVSIDGEVLSYLELAQFHNANQLAAWCLHHICTNYNSVCSKFRKEIKSKSADNQEYFERHRWPPVWYLKEEDHYQRVKREREKEDLALNKHHSRRKWCFWHSSPAVA.

Residues methionine 1–serine 210 are rho-like. GTP-binding positions include glycine 21–threonine 28, aspartate 84–aspartate 88, and cysteine 140–aspartate 143. BTB domains are found at residues alanine 266–glutamate 426 and serine 484–leucine 551. Positions serine 325 to aspartate 351 are disordered.

It belongs to the small GTPase superfamily. Rho family. As to expression, highest expression in heart and testis.

The chain is Rho-related BTB domain-containing protein 1 (Rhobtb1) from Mus musculus (Mouse).